Consider the following 938-residue polypeptide: Myocardin (938 aa).

The MEF2C-binding motif lies at 12 to 27 (IRRKFRSVLQLRLQQR). RPEL repeat units lie at residues 18–43 (SVLQ…PPLK), 62–87 (DSLR…QAST), and 106–131 (DDLN…PMDS). The interval 37–64 (GLIPPLKSPTEFHDPRKKLDSAKTEDSL) is disordered. A compositionally biased stretch (basic and acidic residues) spans 46-64 (TEFHDPRKKLDSAKTEDSL). Residues 153–205 (FEDDSSRDGLSPDQARSEDPQGSGGSTPDIKSTEAPLAGPLDTIQDLTPGSES) are HDAC5-binding. 2 disordered regions span residues 155 to 282 (DDSS…PPPM) and 339 to 381 (NEQM…PLPP). Residues 210-221 (TASQLSNQSDSG) show a composition bias toward polar residues. Over residues 248 to 265 (NRHKKPKDPKPKVKKLKY) the composition is skewed to basic residues. Low complexity predominate over residues 345-360 (NPNSSSTPLNNTPLSP). Residues 361-372 (VKNSLSGQTGVS) show a composition bias toward polar residues. Residues 383–417 (LDDLKVSELRQQLRIRGLPVSGTKTALVDRLRPFQ) form the SAP domain. Residues Ser-457, Ser-461, Ser-465, and Ser-469 each carry the phosphoserine; by GSK3-beta modification. Residues 501 to 521 (ESLLSSLNGGSGPSEPDGLDS) are disordered. A coiled-coil region spans residues 522–566 (EKDKMLVEKQKVINQLTWKLRQEQRQVEELRMQLQKQKSGCNDQK). Residues 586 to 606 (AAQQASGKGQGHSSDSPPPAC) form a disordered region. Residues 588 to 600 (QQASGKGQGHSSD) show a composition bias toward polar residues. A phosphoserine; by GSK3-beta mark is found at Ser-627, Ser-631, Ser-635, and Ser-639. 2 stretches are compositionally biased toward polar residues: residues 667 to 694 (GAQR…QSSD) and 701 to 713 (SIPS…SSPT). The tract at residues 667-734 (GAQRENHGVS…DAVKQQMTRS (68 aa)) is disordered. A required for interaction with and ubiquitination by STUB1 region spans residues 717 to 938 (ITQPPSYEDA…SPMDLHLQQW (222 aa)). 3 positions are modified to phosphoserine; by MAPK1 and MAPK3: Ser-815, Ser-862, and Ser-869. The residue at position 896 (Thr-896) is a Phosphothreonine; by MAPK1 and MAPK3.

Homodimer. Interacts with MLLT7/FOXO4. Interacts with SRF, its association does not depend on specific DNA sequences for ternary complex formation. Interacts (via C-terminal) with EP300 (via the CREB-binding domain). Interacts with HDAC4 and HDAC5. Interacts with MEF2C. Interacts (via C-terminus) with STUB1/CHIP. Interacts with PURB. In terms of processing, ubiquitinated; by STUB1/CHIP at the C-terminus, leading to its degradation by the proteasome. Phosphorylation by GSK3B is required for STUB1/CHIP-mediated ubiquitination. Phosphorylation negatively regulates transcriptional activity. Phosphorylated; by GSK3B. In terms of tissue distribution, abundantly expressed in the heart, aorta media and bladder, weakly expressed in the stomach, intestine and lung.

The protein resides in the nucleus. In terms of biological role, smooth muscle cells (SM) and cardiac muscle cells-specific transcriptional factor which uses the canonical single or multiple CArG boxes DNA sequence. Acts as a cofactor of serum response factor (SRF) with the potential to modulate SRF-target genes. Plays a crucial role in cardiogenesis, urinary bladder development, and differentiation of the smooth muscle cell lineage (myogenesis). Positively regulates the transcription of genes involved in vascular smooth muscle contraction. This chain is Myocardin (Myocd), found in Rattus norvegicus (Rat).